Reading from the N-terminus, the 307-residue chain is Ribosomal RNA small subunit methyltransferase H (307 aa).

S-adenosyl-L-methionine is bound by residues 34–36, aspartate 54, phenylalanine 79, aspartate 101, and glutamine 108; that span reads GGH.

The protein belongs to the methyltransferase superfamily. RsmH family.

The protein resides in the cytoplasm. It carries out the reaction cytidine(1402) in 16S rRNA + S-adenosyl-L-methionine = N(4)-methylcytidine(1402) in 16S rRNA + S-adenosyl-L-homocysteine + H(+). Its function is as follows. Specifically methylates the N4 position of cytidine in position 1402 (C1402) of 16S rRNA. In Ruthia magnifica subsp. Calyptogena magnifica, this protein is Ribosomal RNA small subunit methyltransferase H.